The primary structure comprises 150 residues: D-aminoacyl-tRNA deacylase (150 aa).

Residues 136–137 carry the Gly-cisPro motif, important for rejection of L-amino acids motif; that stretch reads GP.

The protein belongs to the DTD family. In terms of assembly, homodimer.

It localises to the cytoplasm. It catalyses the reaction glycyl-tRNA(Ala) + H2O = tRNA(Ala) + glycine + H(+). It carries out the reaction a D-aminoacyl-tRNA + H2O = a tRNA + a D-alpha-amino acid + H(+). Functionally, an aminoacyl-tRNA editing enzyme that deacylates mischarged D-aminoacyl-tRNAs. Also deacylates mischarged glycyl-tRNA(Ala), protecting cells against glycine mischarging by AlaRS. Acts via tRNA-based rather than protein-based catalysis; rejects L-amino acids rather than detecting D-amino acids in the active site. By recycling D-aminoacyl-tRNA to D-amino acids and free tRNA molecules, this enzyme counteracts the toxicity associated with the formation of D-aminoacyl-tRNA entities in vivo and helps enforce protein L-homochirality. The sequence is that of D-aminoacyl-tRNA deacylase from Macrococcus caseolyticus (strain JCSC5402) (Macrococcoides caseolyticum).